The chain runs to 370 residues: Alpha-ketoglutarate-dependent dioxygenase cnsP (370 aa).

Positions 1 to 12 are enriched in low complexity; the sequence is MSTTTVITPGTI. The tract at residues 1–20 is disordered; the sequence is MSTTTVITPGTITREKNENG. H131 contributes to the substrate binding site. Fe cation-binding residues include H169 and D171. A 2-oxoglutarate-binding site is contributed by T197. H321 is a binding site for Fe cation. 2 residues coordinate 2-oxoglutarate: R333 and R337. Substrate is bound at residue R337.

Belongs to the TfdA dioxygenase family. Fe(2+) serves as cofactor.

It functions in the pathway alkaloid biosynthesis. In terms of biological role, alpha-ketoglutarate-dependent dioxygenase; part of the gene cluster that mediates the biosynthesis of communesins, a prominent class of indole alkaloids with great potential as pharmaceuticals. Communesins are biosynthesized by the coupling of tryptamine and aurantioclavine, two building blocks derived from L-tryptophan. The L-tryptophan decarboxylase cnsB converts L-tryptophan to tryptamine, whereas the tryptophan dimethylallyltransferase cnsF converts L-tryptophan to 4-dimethylallyl tryptophan which is further transformed to aurantioclavine by the aurantioclavine synthase cnsA, probably aided by the catalase cnsD. The cytochrome P450 monooxygenase cnsC catalyzes the heterodimeric coupling between the two different indole moieties, tryptamine and aurantioclavine, to construct vicinal quaternary stereocenters and yield the heptacyclic communesin scaffold. The O-methyltransferase cnsE then methylates the communesin scaffold to produce communesin K, the simplest characterized communesin that contains the heptacyclic core. The dioxygenase cnsJ converts communesin K into communesin I. Acylation to introduce the hexadienyl group at position N16 of communesin I by the acyltransferase cnsK leads to the production of communesin B. The hexadienyl group is produced by the highly reducing polyketide synthase cnsI, before being hydrolytically removed from cnsI by the serine hydrolase cnsH, converted into hexadienyl-CoA by the CoA ligase cnsG, and then transferred to communesin I by cnsK. Surprisingly, cnsK may also be a promiscuous acyltransferase that can tolerate a range of acyl groups, including acetyl-, propionyl-, and butyryl-CoA, which lead to communesins A, G and H respectively. The roles of the alpha-ketoglutarate-dependent dioxygenases cnsM and cnsP have still to be determined. In Penicillium expansum (Blue mold rot fungus), this protein is Alpha-ketoglutarate-dependent dioxygenase cnsP.